Here is a 328-residue protein sequence, read N- to C-terminus: GTPase Obg 2 (328 aa).

The 139-residue stretch at 1 to 139 (MSFRREKFIE…HCVLLKLKIV (139 aa)) folds into the Obg domain. Residues 140–309 (SDVGIIGMPN…LHAQVKKAVV (170 aa)) enclose the OBG-type G domain. GTP contacts are provided by residues 146 to 153 (GMPNAGKS), 171 to 175 (FTTLE), 192 to 195 (DIPG), 259 to 262 (NKCD), and 290 to 292 (GDE). The Mg(2+) site is built by S153 and T173.

Belongs to the TRAFAC class OBG-HflX-like GTPase superfamily. OBG GTPase family. In terms of assembly, monomer. Mg(2+) is required as a cofactor.

It localises to the cytoplasm. An essential GTPase which binds GTP, GDP and possibly (p)ppGpp with moderate affinity, with high nucleotide exchange rates and a fairly low GTP hydrolysis rate. Plays a role in control of the cell cycle, stress response, ribosome biogenesis and in those bacteria that undergo differentiation, in morphogenesis control. The protein is GTPase Obg 2 of Anaplasma marginale (strain St. Maries).